Consider the following 215-residue polypeptide: Thiamine-phosphate synthase (215 aa).

Residues 43 to 47 and Asn78 each bind 4-amino-2-methyl-5-(diphosphooxymethyl)pyrimidine; that span reads QFRDK. Residues Asp79 and Asp98 each contribute to the Mg(2+) site. Ser117 lines the 4-amino-2-methyl-5-(diphosphooxymethyl)pyrimidine pocket. 143-145 serves as a coordination point for 2-[(2R,5Z)-2-carboxy-4-methylthiazol-5(2H)-ylidene]ethyl phosphate; sequence TNS. Lys146 contributes to the 4-amino-2-methyl-5-(diphosphooxymethyl)pyrimidine binding site. 2-[(2R,5Z)-2-carboxy-4-methylthiazol-5(2H)-ylidene]ethyl phosphate-binding positions include Gly174 and 194–195; that span reads IS.

It belongs to the thiamine-phosphate synthase family. Mg(2+) is required as a cofactor.

It catalyses the reaction 2-[(2R,5Z)-2-carboxy-4-methylthiazol-5(2H)-ylidene]ethyl phosphate + 4-amino-2-methyl-5-(diphosphooxymethyl)pyrimidine + 2 H(+) = thiamine phosphate + CO2 + diphosphate. It carries out the reaction 2-(2-carboxy-4-methylthiazol-5-yl)ethyl phosphate + 4-amino-2-methyl-5-(diphosphooxymethyl)pyrimidine + 2 H(+) = thiamine phosphate + CO2 + diphosphate. The enzyme catalyses 4-methyl-5-(2-phosphooxyethyl)-thiazole + 4-amino-2-methyl-5-(diphosphooxymethyl)pyrimidine + H(+) = thiamine phosphate + diphosphate. It participates in cofactor biosynthesis; thiamine diphosphate biosynthesis; thiamine phosphate from 4-amino-2-methyl-5-diphosphomethylpyrimidine and 4-methyl-5-(2-phosphoethyl)-thiazole: step 1/1. Condenses 4-methyl-5-(beta-hydroxyethyl)thiazole monophosphate (THZ-P) and 2-methyl-4-amino-5-hydroxymethyl pyrimidine pyrophosphate (HMP-PP) to form thiamine monophosphate (TMP). In Lactococcus lactis subsp. lactis (strain IL1403) (Streptococcus lactis), this protein is Thiamine-phosphate synthase.